A 78-amino-acid polypeptide reads, in one-letter code: MNNLRVIMSVLLAVLVFTATVSESAEEMGKGEVTISLRCKTKTECLKNIACEACVDCRCDKGICKCHGFTAETNNPTV.

The signal sequence occupies residues 1–24; sequence MNNLRVIMSVLLAVLVFTATVSES. Disulfide bonds link cysteine 39-cysteine 59, cysteine 45-cysteine 64, and cysteine 51-cysteine 66.

It belongs to the DEFL family.

The protein resides in the secreted. The chain is Defensin-like protein 287 from Arabidopsis thaliana (Mouse-ear cress).